Consider the following 482-residue polypeptide: MEPFPRILDDRLPRNMRRPRPIDKMPMRKIVMLGANARTQRSVSSIQLPAEYSPSASSAPYFNYSPDDFILDLRSHQSDEIYENGNSNHEKDEKKALKELLHERWENAKQYNAFNYPLNCMYRCLDGKYDLSMQLNIERGELRRKPMHFKNIKEPFNHLRFNFAKLHDHEILFYLKCDTDPISNDLLDRHLVAVNASPLERDHSLIVPSVNKCSPQVLTLQAVRIAVDLMLLVDDDMFHILFNSLLGQASVNHLHLHAMYWPYDSDLINRKCEPLHDVPNVYVIRPPVWICPAIVFQLDSLDNYEQFKMNIYKCVEHLTESNQAHNLFLARAQPIRTTGAEKEEDRRGERPQLVTCYVFPRMNMIGAKPPSNFNPAANELAGNLTSYTIRFFESANEQSVIRIIEEEASLDDDTFRSLCFDLADVLIGRSVGTSRPQDLDTLAGLTSPEIDELRDSFQSFMPRSPSIRHRSSTRAQSDEGSK.

The interval 1-21 (MEPFPRILDDRLPRNMRRPRP) is disordered. His-255 functions as the Tele-GMP-histidine intermediate in the catalytic mechanism. Residues 461–482 (MPRSPSIRHRSSTRAQSDEGSK) form a disordered region.

It belongs to the GDPGP1 family. Expressed throughout the neuronal system, in the spermatheca and anterior hypodermal cells.

The protein localises to the cytoplasm. It carries out the reaction GDP-alpha-D-glucose + phosphate = alpha-D-glucose 1-phosphate + GDP + H(+). Its function is as follows. Specific and highly efficient GDP-D-glucose phosphorylase regulating the levels of GDP-D-glucose in cells. In Caenorhabditis elegans, this protein is GDP-D-glucose phosphorylase 1.